Here is a 91-residue protein sequence, read N- to C-terminus: MSITTERKQQLIKEYAITENDTGSSAVQCAILTERINNLTEHFKSNHKDHTSRRGLLILVGRRRRLLNYIKKNNVSEYLDLITKLGIRKIK.

It belongs to the universal ribosomal protein uS15 family. As to quaternary structure, part of the 30S ribosomal subunit. Forms a bridge to the 50S subunit in the 70S ribosome, contacting the 23S rRNA.

Functionally, one of the primary rRNA binding proteins, it binds directly to 16S rRNA where it helps nucleate assembly of the platform of the 30S subunit by binding and bridging several RNA helices of the 16S rRNA. In terms of biological role, forms an intersubunit bridge (bridge B4) with the 23S rRNA of the 50S subunit in the ribosome. This Rickettsia typhi (strain ATCC VR-144 / Wilmington) protein is Small ribosomal subunit protein uS15.